A 928-amino-acid chain; its full sequence is DNA polymerase I (928 aa).

In terms of domain architecture, 5'-3' exonuclease spans 1 to 323 (MVQIPQNPLI…ADEAPEVTAT (323 aa)). Residues 324–517 (VISYDNYVTI…LHLKMWPDLQ (194 aa)) form the 3'-5' exonuclease domain. The klenow fragment stretch occupies residues 324–928 (VISYDNYVTI…GSGENWDQAH (605 aa)). Residues 521–928 (GPLNVFENIE…GSGENWDQAH (408 aa)) are polymerase.

It belongs to the DNA polymerase type-A family. As to quaternary structure, single-chain monomer with multiple functions.

The catalysed reaction is DNA(n) + a 2'-deoxyribonucleoside 5'-triphosphate = DNA(n+1) + diphosphate. Its function is as follows. In addition to polymerase activity, this DNA polymerase exhibits 3'-5' and 5'-3' exonuclease activity. It is able to utilize nicked circular duplex DNA as a template and can unwind the parental DNA strand from its template. In terms of biological role, genetic interactions among priB, dam, lexA, nagC, polA, rdgB, rdgB, rep and uup link the PriA-PriB replication restart pathway to DNA double-strand break repair. This is DNA polymerase I (polA) from Escherichia coli (strain K12).